Consider the following 660-residue polypeptide: MSGFELVSDYEPKGDQPEAIRKLSEGLNKGLKHQVLLGVTGSGKTFTVANVIQNVQKPTLVIAHNKTLAAQLFSEFREFFPNNAVEYFVSYYDYYQPEAYLPTTDTYIEKDSSVNEEIDRLRLSATKSLIERKDVIVVSSVSSIYNIGSPDEWRRMSVILRTGDEVGRSDLFAALINIHYERNDIESAKGSFRSKGDTIEVFPAQDNHGVRIELFGDEIDRISSFDPVTGKTIDEVKEDNSIVIYPAKHFVMPQEEMVKALGSIEKELEGQVAKLVSENRILESQRLTQRAKFDLEMIRELGYCSGIENYSRHFDGRKPGDPPSSLLEFFPDDFLLVIDESHVTIPQIRGMHNGDRARKEALINYGFRLPSAYDNRPLTYNEFHHKINQAIYVSATPADYELGISSAVVEQIIRPTGLVDPVVFIRPVENQIDDLIGEVNKVTEKGYRTLVTTLTKRMAEDLTEYLLEMGIRVRYMHSDIDTLERAEIIRDLRKGVFDVLVGINLLREGLDIPEVAFVAILDADKEGFLRSERSLIQTMGRASRNADGYVILYAGKVTGSIEAALRETNRRRQIQLAYNEKHGIVPQTIHKALQRELVETEYGEVVSEVLGVAEDLSDIEIADMVIELEAEMHLAAKNLEFERAAALRDNIKELRSTYSL.

Positions 25 to 183 (EGLNKGLKHQ…ALINIHYERN (159 aa)) constitute a Helicase ATP-binding domain. 38 to 45 (GVTGSGKT) is a binding site for ATP. The Beta-hairpin signature appears at 91–114 (YYDYYQPEAYLPTTDTYIEKDSSV). The Helicase C-terminal domain maps to 431-593 (QIDDLIGEVN…IVPQTIHKAL (163 aa)). Positions 622-657 (ADMVIELEAEMHLAAKNLEFERAAALRDNIKELRST) constitute a UVR domain.

Belongs to the UvrB family. As to quaternary structure, forms a heterotetramer with UvrA during the search for lesions. Interacts with UvrC in an incision complex.

The protein resides in the cytoplasm. The UvrABC repair system catalyzes the recognition and processing of DNA lesions. A damage recognition complex composed of 2 UvrA and 2 UvrB subunits scans DNA for abnormalities. Upon binding of the UvrA(2)B(2) complex to a putative damaged site, the DNA wraps around one UvrB monomer. DNA wrap is dependent on ATP binding by UvrB and probably causes local melting of the DNA helix, facilitating insertion of UvrB beta-hairpin between the DNA strands. Then UvrB probes one DNA strand for the presence of a lesion. If a lesion is found the UvrA subunits dissociate and the UvrB-DNA preincision complex is formed. This complex is subsequently bound by UvrC and the second UvrB is released. If no lesion is found, the DNA wraps around the other UvrB subunit that will check the other stand for damage. The protein is UvrABC system protein B of Methanococcoides burtonii (strain DSM 6242 / NBRC 107633 / OCM 468 / ACE-M).